A 200-amino-acid chain; its full sequence is MTTHRKPSQEQGFLNGQFLLAMPGMSDERFARSVVYICAHSDEGAMGFIINQLQPVQFPDLLRQIGVIGEEDLIILPDRAQHMVVRNGGPVDRTRGFVLHSDDYMVDSTMPVSDDVCLTATVDILRAIYGGGGPERALMALGYSGWAPGQLEMEVAENGWLTCDAPLDMLFDSDIEGKYSRLMLHMGIDMSRLVFDAGHA.

The protein belongs to the UPF0301 (AlgH) family.

The polypeptide is UPF0301 protein BruAb1_0502 (Brucella abortus biovar 1 (strain 9-941)).